The following is a 232-amino-acid chain: Ras-related protein RabP (232 aa).

15-22 contributes to the GTP binding site; the sequence is GNYGVGKS. Positions 35-40 match the Effector region motif; the sequence is DNTTGF. GTP is bound by residues 58–62 and 118–121; these read DTSGQ and NKFD. S-geranylgeranyl cysteine attachment occurs at residues C229 and C230.

Belongs to the small GTPase superfamily. Rab family.

Its subcellular location is the cell membrane. This is Ras-related protein RabP (rabP) from Dictyostelium discoideum (Social amoeba).